A 35-amino-acid polypeptide reads, in one-letter code: Potassium channel toxin alpha-KTx 23.2 (35 aa).

3 cysteine pairs are disulfide-bonded: C6–C26, C12–C31, and C16–C33.

Belongs to the short scorpion toxin superfamily. Potassium channel inhibitor family. Alpha-KTx 23 subfamily. In terms of tissue distribution, expressed by the venom gland.

It localises to the secreted. Its function is as follows. Selectively and irreversibly binds (K(d)=2.9 pM) and blocks Kv1.3/KCNA3 potassium channels of human T-lymphocytes. Weakly blocks Kv1.2/KCNA2 (9%). This chain is Potassium channel toxin alpha-KTx 23.2, found in Vaejovis mexicanus smithi (Mexican scorpion).